The chain runs to 150 residues: 6,7-dimethyl-8-ribityllumazine synthase (150 aa).

5-amino-6-(D-ribitylamino)uracil is bound by residues F11, V43–D45, and A67–I69. A (2S)-2-hydroxy-3-oxobutyl phosphate-binding site is contributed by A72–T73. H75 functions as the Proton donor in the catalytic mechanism. L100 provides a ligand contact to 5-amino-6-(D-ribitylamino)uracil. R115 serves as a coordination point for (2S)-2-hydroxy-3-oxobutyl phosphate.

The protein belongs to the DMRL synthase family.

The catalysed reaction is (2S)-2-hydroxy-3-oxobutyl phosphate + 5-amino-6-(D-ribitylamino)uracil = 6,7-dimethyl-8-(1-D-ribityl)lumazine + phosphate + 2 H2O + H(+). It functions in the pathway cofactor biosynthesis; riboflavin biosynthesis; riboflavin from 2-hydroxy-3-oxobutyl phosphate and 5-amino-6-(D-ribitylamino)uracil: step 1/2. Its function is as follows. Catalyzes the formation of 6,7-dimethyl-8-ribityllumazine by condensation of 5-amino-6-(D-ribitylamino)uracil with 3,4-dihydroxy-2-butanone 4-phosphate. This is the penultimate step in the biosynthesis of riboflavin. The polypeptide is 6,7-dimethyl-8-ribityllumazine synthase (Pyrobaculum calidifontis (strain DSM 21063 / JCM 11548 / VA1)).